A 323-amino-acid polypeptide reads, in one-letter code: Lipoyl synthase (323 aa).

Cysteine 53, cysteine 58, cysteine 64, cysteine 79, cysteine 83, cysteine 86, and serine 293 together coordinate [4Fe-4S] cluster. The 218-residue stretch at 65-282 folds into the Radical SAM core domain; the sequence is WTKKQATVMI…AATARAKGFS (218 aa).

Belongs to the radical SAM superfamily. Lipoyl synthase family. Requires [4Fe-4S] cluster as cofactor.

It is found in the cytoplasm. It catalyses the reaction [[Fe-S] cluster scaffold protein carrying a second [4Fe-4S](2+) cluster] + N(6)-octanoyl-L-lysyl-[protein] + 2 oxidized [2Fe-2S]-[ferredoxin] + 2 S-adenosyl-L-methionine + 4 H(+) = [[Fe-S] cluster scaffold protein] + N(6)-[(R)-dihydrolipoyl]-L-lysyl-[protein] + 4 Fe(3+) + 2 hydrogen sulfide + 2 5'-deoxyadenosine + 2 L-methionine + 2 reduced [2Fe-2S]-[ferredoxin]. It functions in the pathway protein modification; protein lipoylation via endogenous pathway; protein N(6)-(lipoyl)lysine from octanoyl-[acyl-carrier-protein]: step 2/2. Functionally, catalyzes the radical-mediated insertion of two sulfur atoms into the C-6 and C-8 positions of the octanoyl moiety bound to the lipoyl domains of lipoate-dependent enzymes, thereby converting the octanoylated domains into lipoylated derivatives. In Zymomonas mobilis subsp. mobilis (strain ATCC 31821 / ZM4 / CP4), this protein is Lipoyl synthase.